Reading from the N-terminus, the 142-residue chain is Lysozyme X (142 aa).

Positions 1 to 19 (MRALLGICVLALVTPAVLG) are cleaved as a signal peptide. The region spanning 20–142 (RTMDRCSLAR…YLPPIDDCFV (123 aa)) is the C-type lysozyme domain. 4 disulfide bridges follow: cysteine 25–cysteine 140, cysteine 46–cysteine 130, cysteine 81–cysteine 97, and cysteine 93–cysteine 111. Active-site residues include glutamate 51 and aspartate 69.

The protein belongs to the glycosyl hydrolase 22 family. In terms of tissue distribution, found in the midgut.

It carries out the reaction Hydrolysis of (1-&gt;4)-beta-linkages between N-acetylmuramic acid and N-acetyl-D-glucosamine residues in a peptidoglycan and between N-acetyl-D-glucosamine residues in chitodextrins.. Its function is as follows. Unlikely to play an active role in the humoral immune defense. May have a function in the digestion of bacteria in the food. May be involved in the clearance of bacteria from the larval gut before metamorphosis. The sequence is that of Lysozyme X (LysX) from Drosophila melanogaster (Fruit fly).